The sequence spans 73 residues: Toxin Td12 (73 aa).

The N-terminal stretch at 1-7 (IGMVIEC) is a signal peptide. The LCN-type CS-alpha/beta domain maps to 8 to 70 (KDGYLMEPNG…TWDRATNTCG (63 aa)). Intrachain disulfides connect Cys-18-Cys-69, Cys-22-Cys-44, Cys-30-Cys-50, and Cys-34-Cys-52. Position 71 is an arginine amide (Arg-71).

It belongs to the long (4 C-C) scorpion toxin superfamily. Sodium channel inhibitor family. Beta subfamily. As to expression, expressed by the venom gland.

Its subcellular location is the secreted. In terms of biological role, beta toxins bind voltage-independently at site-4 of sodium channels (Nav) and shift the voltage of activation toward more negative potentials thereby affecting sodium channel activation and promoting spontaneous and repetitive firing. This chain is Toxin Td12, found in Tityus discrepans (Venezuelan scorpion).